The sequence spans 295 residues: Probable protein phosphatase 2C 54 (295 aa).

Positions glycine 78–leucine 289 constitute a PPM-type phosphatase domain. Positions 112, 113, 228, and 280 each coordinate Mn(2+).

It belongs to the PP2C family. Mg(2+) serves as cofactor. It depends on Mn(2+) as a cofactor.

It catalyses the reaction O-phospho-L-seryl-[protein] + H2O = L-seryl-[protein] + phosphate. It carries out the reaction O-phospho-L-threonyl-[protein] + H2O = L-threonyl-[protein] + phosphate. This chain is Probable protein phosphatase 2C 54, found in Arabidopsis thaliana (Mouse-ear cress).